We begin with the raw amino-acid sequence, 400 residues long: Zinc finger CCHC domain-containing protein 3 (400 aa).

Residues 1–157 (MATGGGAEEE…LQDEPPAAGP (157 aa)) are disordered. Basic and acidic residues-rich tracts occupy residues 26 to 38 (ARVE…REKM) and 47 to 63 (LAEK…RDET). Over residues 66–75 (GASGGLGSPG) the composition is skewed to gly residues. Residues 91–109 (GDPKGRRRDPTGEASDAYR) are compositionally biased toward basic and acidic residues. Tyrosine 198 is modified (phosphotyrosine). 2 CCHC-type zinc fingers span residues 349–365 (RCFR…YCRK) and 369–384 (CNLC…QCPK).

As to quaternary structure, interacts with CGAS. Interacts with RIGI. Interacts with IFIH1/MDA5.

The protein resides in the cytoplasm. In terms of biological role, nucleic acid-binding protein involved in innate immune response to DNA and RNA viruses. Binds DNA and RNA in the cytoplasm and acts by promoting recognition of viral nucleic acids by virus sensors, such as RIGI, IFIH1/MDA5 and CGAS. Acts as a co-sensor for recognition of double-stranded DNA (dsDNA) by cGAS in the cytoplasm, thereby playing a role in innate immune response to cytosolic dsDNA and DNA virus. Binds dsDNA and probably acts by promoting sensing of dsDNA by CGAS, leading to enhance CGAS oligomerization and activation. Promotes sensing of viral RNA by RIG-I-like receptors proteins RIGI and IFIH1/MDA5 via two mechanisms: binds double-stranded RNA (dsRNA), enhancing the binding of RIGI and IFIH1/MDA5 to dsRNA and promotes 'Lys-63'-linked ubiquitination and subsequent activation of RIGI and IFIH1/MDA5. The polypeptide is Zinc finger CCHC domain-containing protein 3 (Mus musculus (Mouse)).